We begin with the raw amino-acid sequence, 95 residues long: uncharacterized protein (95 aa).

The region spanning 2-92 (VREAAMLHIK…YTPFPTVEHF (91 aa)) is the ABM domain.

This is an uncharacterized protein from Bacillus subtilis (strain 168).